The sequence spans 159 residues: Immunoglobulin J chain (159 aa).

The signal sequence occupies residues 1–22; it reads MKNHLLFWGVLAVFIKAVHVKA. Pyrrolidone carboxylic acid is present on Gln-23. 3 disulfide bridges follow: Cys-35–Cys-123, Cys-94–Cys-114, and Cys-131–Cys-156. N-linked (GlcNAc...) (complex) asparagine glycosylation occurs at Asn-71.

Part of the secretory IgA (sIgA) complex that consists of two, four or five IgA monomers, and two additional non-Ig polypeptides, namely the JCHAIN and the secretory component (the proteolytic product of PIGR). Part of the secretory IgM (sIgM) complex that consists of five IgM monomers, and two additional non-Ig polypeptides, namely the JCHAIN and the secretory component (the proteolytic product of PIGR). JCHAIN-containing IgM interacts (via CH4 domain) with FCRM (via Ig-like domain).

The protein localises to the secreted. In terms of biological role, serves to link two monomer units of either IgM or IgA. In the case of IgM, the J chain-joined dimer is a nucleating unit for the IgM pentamer, and in the case of IgA it induces dimers and/or larger polymers. It also helps to bind these immunoglobulins to secretory component. The polypeptide is Immunoglobulin J chain (Homo sapiens (Human)).